The primary structure comprises 470 residues: Alpha-1A adrenergic receptor (470 aa).

Topologically, residues 1 to 27 (MTPSSVTLNCSNCSHVLAPELNTVKAV) are extracellular. Residues N9 and N12 are each glycosylated (N-linked (GlcNAc...) asparagine). Residues 28 to 51 (VLGMVLGIFILFGVIGNILVILSV) traverse the membrane as a helical segment. Residues 52-64 (VCHRHLQTVTYYF) are Cytoplasmic-facing. A helical transmembrane segment spans residues 65–88 (IVNLAVADLLLSSTVLPFSAIFEI). Residues 89–99 (LDRWVFGRVFC) lie on the Extracellular side of the membrane. A disulfide bond links C99 and C176. Residues 100 to 122 (NIWAAVDVLCCTASIMSLCVISV) form a helical membrane-spanning segment. The Cytoplasmic portion of the chain corresponds to 123-143 (DRYIGVSYPLRYPAIMTKRRA). The chain crosses the membrane as a helical span at residues 144–167 (LLAVMLLWVLSVIISIGPLFGWKE). At 168-181 (PAPEDETVCKITEE) the chain is on the extracellular side. The chain crosses the membrane as a helical span at residues 182–205 (PGYAIFSAVGSFYLPLAIILAMYC). Residues 206 to 271 (RVYVVAQKES…FSREKKAAKT (66 aa)) lie on the Cytoplasmic side of the membrane. A helical transmembrane segment spans residues 272-295 (LGIVVGCFVLCWLPFFLVLPIGSI). The Extracellular portion of the chain corresponds to 296–303 (FPAYRPSD). Residues 304-327 (TVFKITFWLGYFNSCINPIIYLCS) form a helical membrane-spanning segment. Residues 328 to 470 (NQEFKKAFQS…LSLSEKGESV (143 aa)) lie on the Cytoplasmic side of the membrane. The S-palmitoyl cysteine moiety is linked to residue C343. The segment at 375-416 (GAPCRLSPSSSVALSRTPSSRDSREWRVFSGGPINSGPGPTE) is disordered. The span at 381 to 392 (SPSSSVALSRTP) shows a compositional bias: polar residues.

This sequence belongs to the G-protein coupled receptor 1 family. Adrenergic receptor subfamily. ADRA1A sub-subfamily.

The protein resides in the cell membrane. In terms of biological role, this alpha-adrenergic receptor mediates its action by association with G proteins that activate a phosphatidylinositol-calcium second messenger system. This is Alpha-1A adrenergic receptor (adra1a) from Oryzias latipes (Japanese rice fish).